The chain runs to 129 residues: Small ribosomal subunit protein uS11 (129 aa).

The protein belongs to the universal ribosomal protein uS11 family. In terms of assembly, part of the 30S ribosomal subunit. Interacts with proteins S7 and S18. Binds to IF-3.

Functionally, located on the platform of the 30S subunit, it bridges several disparate RNA helices of the 16S rRNA. Forms part of the Shine-Dalgarno cleft in the 70S ribosome. The polypeptide is Small ribosomal subunit protein uS11 (Buchnera aphidicola subsp. Baizongia pistaciae (strain Bp)).